Consider the following 855-residue polypeptide: DNA mismatch repair protein MutS (855 aa).

Residue 613 to 620 participates in ATP binding; that stretch reads GPNMGGKS. Residues 796 to 816 are disordered; sequence TTSLPHEMPSQQSGKPASPMQ.

Belongs to the DNA mismatch repair MutS family.

This protein is involved in the repair of mismatches in DNA. It is possible that it carries out the mismatch recognition step. This protein has a weak ATPase activity. The polypeptide is DNA mismatch repair protein MutS (Pseudomonas aeruginosa (strain LESB58)).